Reading from the N-terminus, the 778-residue chain is Hyperosmolality-gated Ca2+ permeable channel 1.4 (778 aa).

Helical transmembrane passes span 7-27 (IGLA…LFAI), 101-121 (IYLI…SILV), 158-178 (FWAH…VLMK), 375-395 (FVMH…IAFV), 427-447 (FLPG…LMIM), 467-487 (YYIF…SAFE), 512-532 (ATFF…GEIF), 584-604 (PVTP…YLVF), 626-646 (VHGR…GLMS), and 651-671 (VQST…HRFC). Positions 738-778 (VVQTKRQRSRRTTVASSNASRGSSQSTPFNQLDLGKGKPET) are disordered. Residues 753 to 763 (SSNASRGSSQS) are compositionally biased toward low complexity.

The protein belongs to the CSC1 (TC 1.A.17) family.

It localises to the membrane. In terms of biological role, acts as an osmosensitive calcium-permeable cation channel. This is Hyperosmolality-gated Ca2+ permeable channel 1.4 from Arabidopsis thaliana (Mouse-ear cress).